The sequence spans 565 residues: Formate--tetrahydrofolate ligase (565 aa).

ATP is bound at residue 65–72; sequence TPAGEGKT.

It belongs to the formate--tetrahydrofolate ligase family.

The catalysed reaction is (6S)-5,6,7,8-tetrahydrofolate + formate + ATP = (6R)-10-formyltetrahydrofolate + ADP + phosphate. It functions in the pathway one-carbon metabolism; tetrahydrofolate interconversion. This Syntrophus aciditrophicus (strain SB) protein is Formate--tetrahydrofolate ligase.